The primary structure comprises 213 residues: Ethylene-responsive transcription factor WIN1 (213 aa).

The AP2/ERF DNA-binding region spans 15–72 (KFRGVRQRHWGSWVSEIRHPLLKRRVWLGTFETAEEAARAYDEAAVLMSGRNAKTNFP). Positions 70-80 (NFPIQRSSTGE) are enriched in polar residues. Disordered regions lie at residues 70–99 (NFPIQRSSTGEPTPAAGRDARSNFSSGSST) and 159–213 (ASTD…RFII). Positions 159–174 (ASTDAASQSTSATTAP) are enriched in low complexity.

It belongs to the AP2/ERF transcription factor family. ERF subfamily. In terms of tissue distribution, mostly expressed in roots, stems and anthers, and, to a lower extent, in leaves, seeds and silks.

It localises to the nucleus. Functionally, promotes cuticle formation by inducing the expression of enzymes involved in wax biosynthesis, particularly promoting very-long-chain waxes formation. Confers drought resistance. Acts as a transcriptional activator binding directly to promoter regions of CER2, CER3.2 and KCS1, wax biosynthesis-related genes. Binds to the GCC-box pathogenesis-related promoter element. May be involved in the regulation of gene expression by stress factors and by components of stress signal transduction pathways. This chain is Ethylene-responsive transcription factor WIN1, found in Zea mays (Maize).